A 101-amino-acid chain; its full sequence is Urease subunit beta (101 aa).

The protein belongs to the urease beta subunit family. In terms of assembly, heterotrimer of UreA (gamma), UreB (beta) and UreC (alpha) subunits. Three heterotrimers associate to form the active enzyme.

It localises to the cytoplasm. The enzyme catalyses urea + 2 H2O + H(+) = hydrogencarbonate + 2 NH4(+). It participates in nitrogen metabolism; urea degradation; CO(2) and NH(3) from urea (urease route): step 1/1. The sequence is that of Urease subunit beta from Ectopseudomonas mendocina (strain ymp) (Pseudomonas mendocina).